The following is a 115-amino-acid chain: UPF0738 protein SAB0871 (115 aa).

It belongs to the UPF0738 family.

The protein is UPF0738 protein SAB0871 of Staphylococcus aureus (strain bovine RF122 / ET3-1).